The primary structure comprises 273 residues: Vacuolar iron transporter (273 aa).

Over 1–47 the chain is Cytoplasmic; that stretch reads MVSKKTIEARKAYYNEDVVLSKEAHDFYHNLDKHGENHNLDKDNLKT. The helical transmembrane segment at 48–68 threads the bilayer; that stretch reads IIFGSLDGIITIFAIVSGCVG. The Vacuolar portion of the chain corresponds to 69–75; the sequence is AKITPTQ. Residues 76–96 form a helical membrane-spanning segment; the sequence is VIIIGIGNLFANAISMGFSEY. At 97–181 the chain is on the cytoplasmic side; that stretch reads TSSTAQRDFM…NEDKNECLKK (85 aa). Residues E113, E116, E124, E127, M161, and E165 each contribute to the Fe cation site. The chain crosses the membrane as a helical span at residues 182–202; the sequence is GIIMFLSFAVFGIIPLSAYVA. Over 203 to 212 the chain is Vacuolar; the sequence is YTVFFGYTDY. The helical transmembrane segment at 213 to 233 threads the bilayer; that stretch reads TTSFLVVFISTLTTLFILGLF. At 234-246 the chain is on the cytoplasmic side; it reads KSQFTNQKPITCA. A helical membrane pass occupies residues 247–267; sequence LYMVLNGMIAGMVPFLLGVVL. Over 268–273 the chain is Vacuolar; the sequence is KNNISE.

Belongs to the CCC1 family. As to quaternary structure, monomer.

The protein localises to the vacuole membrane. It is found in the endoplasmic reticulum membrane. Its subcellular location is the cytoplasmic vesicle membrane. The enzyme catalyses Fe(2+)(in) = Fe(2+)(out). Vacuolar iron transporter involved in the transfer of iron ions from the cytosol to the vacuole for intracellular iron storage. Involved in detoxification of excess iron. The transport mechanism is not well defined and the role of protons is not clear. This Plasmodium falciparum (isolate 3D7) protein is Vacuolar iron transporter.